Reading from the N-terminus, the 214-residue chain is Adenylate kinase (214 aa).

10-15 (GAGKGT) serves as a coordination point for ATP. The tract at residues 30–59 (STGDMLRAAVKAGTPLGLEAKKVMDAGQLV) is NMP. Residues T31, R36, 57–59 (QLV), 85–88 (GFPR), and Q92 each bind AMP. The tract at residues 122-159 (GRRVHPGSGRVYHVVFNPPKVEGKDDVTGEDLAIRPDD) is LID. ATP is bound by residues R123 and 132-133 (VY). AMP contacts are provided by R156 and R167. Q200 is a binding site for ATP.

The protein belongs to the adenylate kinase family. As to quaternary structure, monomer.

Its subcellular location is the cytoplasm. The catalysed reaction is AMP + ATP = 2 ADP. It functions in the pathway purine metabolism; AMP biosynthesis via salvage pathway; AMP from ADP: step 1/1. In terms of biological role, catalyzes the reversible transfer of the terminal phosphate group between ATP and AMP. Plays an important role in cellular energy homeostasis and in adenine nucleotide metabolism. The polypeptide is Adenylate kinase (Shewanella baltica (strain OS155 / ATCC BAA-1091)).